The chain runs to 321 residues: MASNSIKIFAGNSHPELAEKVARRIGLSLGKVAVVQYSNRETSVTIGESVRDEDVFILQTGCGSINDHLMELLIMINACRSASARRITAIIPCFPYARQDKKDKSRAPITARLVANMLQTAGCNHIITMDLHASQIQGFFNVPVDNLYAEPSVLRYIRENIDTTVNPTVIVSPDAGGAKRATALADRLDLDFALIHKERQKANEVSRMVLVGDVRDKLAILVDDMADTCGTLGLAAKTLKDNGAKAVYAIVTHGILSGKAIKVINESALEKVIVTNTIPHDDKRSLCSKIETIDISGVLAECIRRIHHGESVSVLFSVAPA.

Residues Asp130, His132, and Asp145 each coordinate Mg(2+). Ser172 is subject to Phosphoserine.

The protein belongs to the ribose-phosphate pyrophosphokinase family.

The protein resides in the cytoplasm. It carries out the reaction D-ribose 5-phosphate + ATP = 5-phospho-alpha-D-ribose 1-diphosphate + AMP + H(+). It functions in the pathway metabolic intermediate biosynthesis; 5-phospho-alpha-D-ribose 1-diphosphate biosynthesis; 5-phospho-alpha-D-ribose 1-diphosphate from D-ribose 5-phosphate (route I): step 1/1. 5-phosphoribose 1-diphosphate synthase involved in nucleotide, histidine, and tryptophan biosynthesis. Active in heteromultimeric complexes with other 5-phosphoribose 1-diphosphate synthases. The chain is Ribose-phosphate pyrophosphokinase 2 from Schizosaccharomyces pombe (strain 972 / ATCC 24843) (Fission yeast).